Here is a 419-residue protein sequence, read N- to C-terminus: UDP-N-acetylglucosamine 1-carboxyvinyltransferase (419 aa).

Residue 22–23 (KN) participates in phosphoenolpyruvate binding. R95 serves as a coordination point for UDP-N-acetyl-alpha-D-glucosamine. C119 serves as the catalytic Proton donor. C119 is subject to 2-(S-cysteinyl)pyruvic acid O-phosphothioketal. Residues 164–167 (KVSV), D308, and I330 contribute to the UDP-N-acetyl-alpha-D-glucosamine site.

It belongs to the EPSP synthase family. MurA subfamily.

Its subcellular location is the cytoplasm. It catalyses the reaction phosphoenolpyruvate + UDP-N-acetyl-alpha-D-glucosamine = UDP-N-acetyl-3-O-(1-carboxyvinyl)-alpha-D-glucosamine + phosphate. It participates in cell wall biogenesis; peptidoglycan biosynthesis. In terms of biological role, cell wall formation. Adds enolpyruvyl to UDP-N-acetylglucosamine. This chain is UDP-N-acetylglucosamine 1-carboxyvinyltransferase, found in Rickettsia felis (strain ATCC VR-1525 / URRWXCal2) (Rickettsia azadi).